The primary structure comprises 37 residues: Cytochrome b6-f complex subunit 5 (37 aa).

The chain crosses the membrane as a helical span at residues 5 to 25; the sequence is FLFGIVLGLIPITLAGLFVTA.

The protein belongs to the PetG family. In terms of assembly, the 4 large subunits of the cytochrome b6-f complex are cytochrome b6, subunit IV (17 kDa polypeptide, PetD), cytochrome f and the Rieske protein, while the 4 small subunits are PetG, PetL, PetM and PetN. The complex functions as a dimer.

Its subcellular location is the plastid. The protein resides in the chloroplast thylakoid membrane. Component of the cytochrome b6-f complex, which mediates electron transfer between photosystem II (PSII) and photosystem I (PSI), cyclic electron flow around PSI, and state transitions. PetG is required for either the stability or assembly of the cytochrome b6-f complex. This chain is Cytochrome b6-f complex subunit 5, found in Capsella bursa-pastoris (Shepherd's purse).